The primary structure comprises 654 residues: Tumor necrosis factor alpha-induced protein 2 (654 aa).

2 disordered regions span residues 1 to 38 (MSEASSEDLVPPLEAGAAPYREEEEAAKKKKEKKKKSK) and 50 to 78 (GKKKKGQPSSAEPEDAAGSRQGLDGPPPT). Positions 28 to 38 (KKKKEKKKKSK) are enriched in basic residues.

This sequence belongs to the SEC6 family.

In terms of biological role, may play a role as a mediator of inflammation and angiogenesis. In Homo sapiens (Human), this protein is Tumor necrosis factor alpha-induced protein 2 (TNFAIP2).